The primary structure comprises 1197 residues: Sensor protein EvgS (1197 aa).

The N-terminal stretch at 1–21 is a signal peptide; the sequence is MKFLPYIFLLCCGLWSTISFA. At 22-325 the chain is on the cytoplasmic side; it reads DEDYIEYRGI…SMTDENGSVR (304 aa). Residues 326–346 form a helical membrane-spanning segment; sequence GVMGDILNIITLQTGLNFSPI. Over 347 to 537 the chain is Periplasmic; it reads TVSHNIHAGT…TWDLYSEQFY (191 aa). A helical membrane pass occupies residues 538–558; that stretch reads IVTTLSVLLVGSSLLWGFYLL. Over 559–1197 the chain is Cytoplasmic; sequence RSVRRRKVIQ…EIAVFCQKND (639 aa). The Histidine kinase domain maps to 718–938; the sequence is TMSHEIRTPI…TFTITIPVEI (221 aa). The residue at position 721 (His721) is a Phosphohistidine; by autocatalysis. The region spanning 960 to 1074 is the Response regulatory domain; it reads SILIADDHPT…VLKTHLSQLH (115 aa). At Asp1009 the chain carries 4-aspartylphosphate. One can recognise an HPt domain in the interval 1098–1197; that stretch reads DLQLMQEILM…EIAVFCQKND (100 aa). At His1137 the chain carries Phosphohistidine.

In terms of processing, activation requires a sequential transfer of a phosphate group from a His in the primary transmitter domain, to an Asp in the receiver domain and to a His in the secondary transmitter domain.

The protein resides in the cell inner membrane. The enzyme catalyses ATP + protein L-histidine = ADP + protein N-phospho-L-histidine.. In terms of biological role, member of the two-component regulatory system EvgS/EvgA. Phosphorylates EvgA via a four-step phosphorelay in response to environmental signals. The polypeptide is Sensor protein EvgS (evgS) (Escherichia coli (strain K12)).